Consider the following 525-residue polypeptide: Calcium uptake protein 1 homolog, mitochondrial (525 aa).

The segment at 109 to 146 is disordered; sequence ADAGQRPSSAADVNGEDKSSESESEDSEDEEAGSDLHL. Acidic residues predominate over residues 130-141; that stretch reads SESEDSEDEEAG. EF-hand domains are found at residues 268-303 and 459-494; these read ISRR…VRQQ and LSDH…RVQR. Positions 281, 283, 285, 287, 292, 472, 474, 476, 478, and 483 each coordinate Ca(2+).

This sequence belongs to the MICU1 family. MICU1 subfamily.

It is found in the mitochondrion intermembrane space. The protein localises to the mitochondrion inner membrane. In terms of biological role, calcium sensor of the mitochondrial calcium uniporter (MCU) channel, which senses calcium level via its EF-hand domains. At low calcium levels, MICU1 occludes the pore of the MCU channel, preventing mitochondrial calcium uptake. At higher calcium levels, calcium-binding to MICU1 induces a conformational change that weakens MCU-MICU1 interactions and moves MICU1 away from the pore, allowing calcium permeation through the MCU channel. Also required to protect against manganese toxicity by preventing manganese uptake by MCU. During development, required in alpha/beta or gamma mushroom body neurons to support olfactory intermediate-term memory in the adult. This chain is Calcium uptake protein 1 homolog, mitochondrial, found in Drosophila melanogaster (Fruit fly).